The chain runs to 251 residues: Hydroxyacylglutathione hydrolase (251 aa).

Residues His-53, His-55, Asp-57, His-58, His-110, Asp-127, and His-165 each contribute to the Zn(2+) site.

This sequence belongs to the metallo-beta-lactamase superfamily. Glyoxalase II family. Monomer. Zn(2+) serves as cofactor.

It carries out the reaction an S-(2-hydroxyacyl)glutathione + H2O = a 2-hydroxy carboxylate + glutathione + H(+). The protein operates within secondary metabolite metabolism; methylglyoxal degradation; (R)-lactate from methylglyoxal: step 2/2. Thiolesterase that catalyzes the hydrolysis of S-D-lactoyl-glutathione to form glutathione and D-lactic acid. This Buchnera aphidicola subsp. Acyrthosiphon pisum (strain APS) (Acyrthosiphon pisum symbiotic bacterium) protein is Hydroxyacylglutathione hydrolase.